Reading from the N-terminus, the 310-residue chain is Tyrosine recombinase XerC (310 aa).

The Core-binding (CB) domain occupies 1-92 (MDELIKEFDR…SLRAFFKYLH (92 aa)). Residues 113–300 (YIPAVLSVDE…SVNRLMAVYD (188 aa)) form the Tyr recombinase domain. Active-site residues include Arg-153, Lys-177, His-252, Arg-255, and His-278. Tyr-287 serves as the catalytic O-(3'-phospho-DNA)-tyrosine intermediate.

This sequence belongs to the 'phage' integrase family. XerC subfamily. In terms of assembly, forms a cyclic heterotetrameric complex composed of two molecules of XerC and two molecules of XerD.

The protein resides in the cytoplasm. In terms of biological role, site-specific tyrosine recombinase, which acts by catalyzing the cutting and rejoining of the recombining DNA molecules. The XerC-XerD complex is essential to convert dimers of the bacterial chromosome into monomers to permit their segregation at cell division. It also contributes to the segregational stability of plasmids. In Syntrophus aciditrophicus (strain SB), this protein is Tyrosine recombinase XerC.